Here is a 380-residue protein sequence, read N- to C-terminus: MAPNIRKSHPLLKTINNSLIDLPTPSNISAWWNFGSLLAVCLITQILTGLLLAMHYTADTTLAFSSVAYTCRNVQYGWLLHNLHANGASFFFICIFLHIGRGLYYGSYLYKETWNTGVVLLLTLMATAFVGYVLPWGQMSFWGATVITNLFSAIPYIGQTLVEWAWGGFSVDNPTLTRFFALHFLLPFMIAGITIIHLMFLHESGSNNPLGISSNADKIPFHPYYSIKDILGLTIMLTPLLTLTLFSPNLLGDPENFTPANPLVTPPHIKPEWYFLFAYAILRSIPNKLGGVLALAASVLILLLIPFLHKSKQRAMTFRPLSQTLFWLLVANLLILTWVGSQPVEHPFIIIGQMASLSYFTILLILFPLIGALENKMLNL.

4 helical membrane-spanning segments follow: residues 34–54, 78–99, 114–134, and 179–199; these read FGSL…LLAM, WLLH…FLHI, WNTG…GYVL, and FFAL…IHLM. Histidine 84 and histidine 98 together coordinate heme b. Positions 183 and 197 each coordinate heme b. Histidine 202 is a binding site for a ubiquinone. Transmembrane regions (helical) follow at residues 227-247, 289-309, 321-341, and 348-368; these read IKDI…TLFS, LGGV…PFLH, LSQT…WVGS, and FIII…ILFP.

Belongs to the cytochrome b family. In terms of assembly, the cytochrome bc1 complex contains 11 subunits: 3 respiratory subunits (MT-CYB, CYC1 and UQCRFS1), 2 core proteins (UQCRC1 and UQCRC2) and 6 low-molecular weight proteins (UQCRH/QCR6, UQCRB/QCR7, UQCRQ/QCR8, UQCR10/QCR9, UQCR11/QCR10 and a cleavage product of UQCRFS1). This cytochrome bc1 complex then forms a dimer. Heme b serves as cofactor.

Its subcellular location is the mitochondrion inner membrane. Component of the ubiquinol-cytochrome c reductase complex (complex III or cytochrome b-c1 complex) that is part of the mitochondrial respiratory chain. The b-c1 complex mediates electron transfer from ubiquinol to cytochrome c. Contributes to the generation of a proton gradient across the mitochondrial membrane that is then used for ATP synthesis. The protein is Cytochrome b (MT-CYB) of Meleagris gallopavo (Wild turkey).